The sequence spans 141 residues: Large ribosomal subunit protein uL11 (141 aa).

It belongs to the universal ribosomal protein uL11 family. In terms of assembly, part of the ribosomal stalk of the 50S ribosomal subunit. Interacts with L10 and the large rRNA to form the base of the stalk. L10 forms an elongated spine to which L12 dimers bind in a sequential fashion forming a multimeric L10(L12)X complex. Post-translationally, one or more lysine residues are methylated.

Forms part of the ribosomal stalk which helps the ribosome interact with GTP-bound translation factors. The sequence is that of Large ribosomal subunit protein uL11 from Campylobacter jejuni subsp. jejuni serotype O:6 (strain 81116 / NCTC 11828).